Here is a 241-residue protein sequence, read N- to C-terminus: Phosphatidylcholine synthase (241 aa).

At 1–15 (MKFFNYRRVPYAEIR) the chain is on the cytoplasmic side. The helical transmembrane segment at 16–36 (AFSVHILTASGSFLAFLGVVA) threads the bilayer. Over 37–41 (AAEHR) the chain is Periplasmic. The helical transmembrane segment at 42–62 (FVDMFWWLGLALLVDGIDGPI) threads the bilayer. At 63-76 (ARKVQVKEVLPNWS) the chain is on the cytoplasmic side. Residues 77–97 (GDTLDNVIDYVTYVLLPAFAL) traverse the membrane as a helical segment. Over 98–100 (YQS) the chain is Periplasmic. Residues 101–121 (GMIGEPWSFVAAGAIVVSSAI) traverse the membrane as a helical segment. Topologically, residues 122–133 (YYADMGMKTDEY) are cytoplasmic. Residues 134-154 (FFSGFPVVWNMVVFTLFVIQA) form a helical membrane-spanning segment. The Periplasmic segment spans residues 155–156 (SE). A helical transmembrane segment spans residues 157–177 (VTASIVVFLSVILTFLPINFL). Over 178-187 (HPVRVKRLRP) the chain is Cytoplasmic. A helical membrane pass occupies residues 188–208 (LNLGIFLVWSVLGMYALLLHF). The Periplasmic portion of the chain corresponds to 209-211 (ETP). Residues 212 to 232 (PWVVVGVVATGLYLYVIGFIL) form a helical membrane-spanning segment. Residues 233–241 (QIFPKLGRA) are Cytoplasmic-facing.

It belongs to the CDP-alcohol phosphatidyltransferase class-I family. The cofactor is Mn(2+).

It is found in the cell inner membrane. It catalyses the reaction a CDP-1,2-diacyl-sn-glycerol + choline = a 1,2-diacyl-sn-glycero-3-phosphocholine + CMP + H(+). With respect to regulation, activated by CDP-diacylglycerol especially in the presence of Triton X-100 (0.1% w/v) at concentrations where micelles are formed. Maximal activation by Triton X-100 at 0.2% w/v, but higher concentrations become inhibitory. Inhibited by EDTA and high concentrations of choline. Functionally, condenses choline with CDP-diglyceride to produce phosphatidylcholine and CMP. This is Phosphatidylcholine synthase (pcs) from Rhizobium meliloti (strain 1021) (Ensifer meliloti).